We begin with the raw amino-acid sequence, 209 residues long: ATP-dependent Clp protease proteolytic subunit (209 aa).

The active-site Nucleophile is Ser111. His136 is a catalytic residue.

This sequence belongs to the peptidase S14 family. In terms of assembly, fourteen ClpP subunits assemble into 2 heptameric rings which stack back to back to give a disk-like structure with a central cavity, resembling the structure of eukaryotic proteasomes.

It is found in the cytoplasm. The enzyme catalyses Hydrolysis of proteins to small peptides in the presence of ATP and magnesium. alpha-casein is the usual test substrate. In the absence of ATP, only oligopeptides shorter than five residues are hydrolyzed (such as succinyl-Leu-Tyr-|-NHMec, and Leu-Tyr-Leu-|-Tyr-Trp, in which cleavage of the -Tyr-|-Leu- and -Tyr-|-Trp bonds also occurs).. Functionally, cleaves peptides in various proteins in a process that requires ATP hydrolysis. Has a chymotrypsin-like activity. Plays a major role in the degradation of misfolded proteins. The sequence is that of ATP-dependent Clp protease proteolytic subunit from Dechloromonas aromatica (strain RCB).